Consider the following 392-residue polypeptide: Phospho-N-acetylmuramoyl-pentapeptide-transferase (392 aa).

10 consecutive transmembrane segments (helical) span residues 24–44 (YLTF…LLAG), 76–96 (TMGG…WFDL), 100–120 (FVWV…VDDW), 137–157 (YFWQ…CISE), 193–213 (VSYP…IVGS), 225–245 (GLAI…AYVT), 262–282 (AGEL…FLWF), 289–309 (VFMG…IAII), 314–334 (IVLA…MLQV), and 369–389 (QVVV…LTTL).

Belongs to the glycosyltransferase 4 family. MraY subfamily. It depends on Mg(2+) as a cofactor.

It is found in the cell inner membrane. It catalyses the reaction UDP-N-acetyl-alpha-D-muramoyl-L-alanyl-gamma-D-glutamyl-meso-2,6-diaminopimeloyl-D-alanyl-D-alanine + di-trans,octa-cis-undecaprenyl phosphate = di-trans,octa-cis-undecaprenyl diphospho-N-acetyl-alpha-D-muramoyl-L-alanyl-D-glutamyl-meso-2,6-diaminopimeloyl-D-alanyl-D-alanine + UMP. It functions in the pathway cell wall biogenesis; peptidoglycan biosynthesis. Catalyzes the initial step of the lipid cycle reactions in the biosynthesis of the cell wall peptidoglycan: transfers peptidoglycan precursor phospho-MurNAc-pentapeptide from UDP-MurNAc-pentapeptide onto the lipid carrier undecaprenyl phosphate, yielding undecaprenyl-pyrophosphoryl-MurNAc-pentapeptide, known as lipid I. In Paracidovorax citrulli (strain AAC00-1) (Acidovorax citrulli), this protein is Phospho-N-acetylmuramoyl-pentapeptide-transferase.